The sequence spans 94 residues: Cell division topological specificity factor (94 aa).

It belongs to the MinE family.

Prevents the cell division inhibition by proteins MinC and MinD at internal division sites while permitting inhibition at polar sites. This ensures cell division at the proper site by restricting the formation of a division septum at the midpoint of the long axis of the cell. The chain is Cell division topological specificity factor from Hamiltonella defensa subsp. Acyrthosiphon pisum (strain 5AT).